The primary structure comprises 193 residues: Holliday junction branch migration complex subunit RuvA (193 aa).

The interval Met1–Leu64 is domain I. The tract at residues Thr65–Leu139 is domain II. Residues Leu139 to Ala143 are flexible linker. The segment at Ser144 to Ala193 is domain III.

Belongs to the RuvA family. As to quaternary structure, homotetramer. Forms an RuvA(8)-RuvB(12)-Holliday junction (HJ) complex. HJ DNA is sandwiched between 2 RuvA tetramers; dsDNA enters through RuvA and exits via RuvB. An RuvB hexamer assembles on each DNA strand where it exits the tetramer. Each RuvB hexamer is contacted by two RuvA subunits (via domain III) on 2 adjacent RuvB subunits; this complex drives branch migration. In the full resolvosome a probable DNA-RuvA(4)-RuvB(12)-RuvC(2) complex forms which resolves the HJ.

The protein localises to the cytoplasm. The RuvA-RuvB-RuvC complex processes Holliday junction (HJ) DNA during genetic recombination and DNA repair, while the RuvA-RuvB complex plays an important role in the rescue of blocked DNA replication forks via replication fork reversal (RFR). RuvA specifically binds to HJ cruciform DNA, conferring on it an open structure. The RuvB hexamer acts as an ATP-dependent pump, pulling dsDNA into and through the RuvAB complex. HJ branch migration allows RuvC to scan DNA until it finds its consensus sequence, where it cleaves and resolves the cruciform DNA. The sequence is that of Holliday junction branch migration complex subunit RuvA from Burkholderia thailandensis (strain ATCC 700388 / DSM 13276 / CCUG 48851 / CIP 106301 / E264).